The primary structure comprises 638 residues: RNA exonuclease 3 (638 aa).

The tract at residues 37-136 is disordered; sequence AQDQVLEQKE…PPRRAPKEAL (100 aa). Residues 55 to 76 show a composition bias toward basic and acidic residues; that stretch reads LKLEPRPEAKETPKDDLRHVSD. Polar residues predominate over residues 77–111; sequence SGRSTPVKKTTAPATNAENISPVSRQPNIPKNTAT. Positions 408–584 constitute an Exonuclease domain; sequence ICFDCEMGYT…VEDALATGDL (177 aa). Polar residues predominate over residues 612 to 622; it reads DSSSNTVSMQT. The tract at residues 612-638 is disordered; it reads DSSSNTVSMQTKLGEGAGAKRAREGTS.

The protein belongs to the REXO1/REXO3 family.

It is found in the cytoplasm. Its subcellular location is the nucleus. Functionally, 3' to 5' exoribonuclease required for proper 3' end maturation of MRP RNA and of the U5L snRNA. In Emericella nidulans (strain FGSC A4 / ATCC 38163 / CBS 112.46 / NRRL 194 / M139) (Aspergillus nidulans), this protein is RNA exonuclease 3 (rex3).